The following is a 456-amino-acid chain: MKLKILHFTSGNKLHIDNILKKLKSKLSEFEYQFYISLMEYDENASRTDMKVFYVPNIFVANWIKSNHLESIIDAFEEESNNGVRPEIHIKVKEKKENVKSLKNNKSMLYFNTNGLSLNPFYTFENFVVGKSNEYAYTIAKLVLQQQASAYNPVLLYGKSGLGKTHLLNAIGNDVKEKNKNVLYVTSEDFLNDYMDKIKRKTMDSFRDKYRKCDYLLIDDVQFFGGKEGIQEELLHTFNTLHNSQKQIVMTSDKPPKEIKGLEERLRTRFEWGAMAEITNPELETKIAIIKSKCEVNRIVLENEVIDYIASNIYGNIRQIEGILSTINAHINLSPESSSLKIAKNVLKNYQIEKLEGITLDNIIKVVSKELNIKPSEIVSKERNRKVTFARRAVIYLAHSLMINSMNIIAKELGMKDHSSVSKALKAIKKEIAENSTTRNIIEDMKSKIQQSLDSV.

Residues 1–83 are domain I, interacts with DnaA modulators; sequence MKLKILHFTS…DAFEEESNNG (83 aa). The segment at 83 to 116 is domain II; it reads GVRPEIHIKVKEKKENVKSLKNNKSMLYFNTNGL. The tract at residues 117-331 is domain III, AAA+ region; it reads SLNPFYTFEN…GILSTINAHI (215 aa). ATP contacts are provided by glycine 161, glycine 163, lysine 164, and threonine 165. Residues 332-456 form a domain IV, binds dsDNA region; it reads NLSPESSSLK…SKIQQSLDSV (125 aa).

This sequence belongs to the DnaA family. In terms of assembly, oligomerizes as a right-handed, spiral filament on DNA at oriC.

The protein localises to the cytoplasm. Its function is as follows. Plays an essential role in the initiation and regulation of chromosomal replication. ATP-DnaA binds to the origin of replication (oriC) to initiate formation of the DNA replication initiation complex once per cell cycle. Binds the DnaA box (a 9 base pair repeat at the origin) and separates the double-stranded (ds)DNA. Forms a right-handed helical filament on oriC DNA; dsDNA binds to the exterior of the filament while single-stranded (ss)DNA is stabiized in the filament's interior. The ATP-DnaA-oriC complex binds and stabilizes one strand of the AT-rich DNA unwinding element (DUE), permitting loading of DNA polymerase. After initiation quickly degrades to an ADP-DnaA complex that is not apt for DNA replication. Binds acidic phospholipids. In Helicobacter hepaticus (strain ATCC 51449 / 3B1), this protein is Chromosomal replication initiator protein DnaA.